Here is a 300-residue protein sequence, read N- to C-terminus: MEKVRRILVHLSKENAAPQCARFLQSITGHFVGSAEDQATVSCSLENNRFILGDRLCDGGVPLKRASFCPIKYLSDSEAVSLPSETLSRGVDVGVAVLLQSANQKLLLTRRASSLRSFPNVWVPPGGHVELDEKLLDAGLRELLEETGLNLSPDEICSRLLGLWESVYPPMLTIGLPKRHHIVTYILLKSSQTHLQIQASLRPDPAEVSACVWVDADLVKAVVSAVDGEKECVQIPADLPESIGVTKVSPDGEMSESSLPVSVLCNRAPDYGEDIERVSTGTKFALELWLKTLEHHADMG.

A Nudix hydrolase domain is found at 88–239 (SRGVDVGVAV…KECVQIPADL (152 aa)). The Nudix box motif lies at 127–148 (GHVELDEKLLDAGLRELLEETG). Residues glutamate 142 and glutamate 146 each contribute to the Mg(2+) site.

It belongs to the Nudix hydrolase family. Mg(2+) is required as a cofactor. Requires Mn(2+) as cofactor.

It catalyses the reaction a 5'-end (N(7)-methyl 5'-triphosphoguanosine)-ribonucleoside in mRNA + H2O = N(7)-methyl-GDP + a 5'-end phospho-ribonucleoside in mRNA + 2 H(+). Functionally, acts as a decapping enzyme capable of hydrolyzing monomethylated capped RNAs (in vitro). Hydrolyzes monomethylated capped RNA after alpha and beta phosphates to form N(7)-methyl-GDP. Shows low activity towards unmethylated capped RNA. The sequence is that of m7GpppN-mRNA hydrolase NUDT17 (nudt17) from Danio rerio (Zebrafish).